The sequence spans 154 residues: UPF0756 membrane protein RBAM_026200 (154 aa).

A run of 4 helical transmembrane segments spans residues 14–34 (AIAL…LIVI), 54–74 (WGVT…DIGF), 87–107 (WIAL…LTLL), and 117–137 (LVIG…GPLI).

It belongs to the UPF0756 family.

Its subcellular location is the cell membrane. This is UPF0756 membrane protein RBAM_026200 from Bacillus velezensis (strain DSM 23117 / BGSC 10A6 / LMG 26770 / FZB42) (Bacillus amyloliquefaciens subsp. plantarum).